A 457-amino-acid polypeptide reads, in one-letter code: Siroheme synthase (457 aa).

Residues M1–T204 are precorrin-2 dehydrogenase /sirohydrochlorin ferrochelatase. Residues D22–V23 and L43–A44 contribute to the NAD(+) site. S128 carries the phosphoserine modification. A uroporphyrinogen-III C-methyltransferase region spans residues G216–H457. P225 lines the S-adenosyl-L-methionine pocket. D248 (proton acceptor) is an active-site residue. K270 (proton donor) is an active-site residue. Residues G301–D303, I306, T331–A332, M382, and G411 each bind S-adenosyl-L-methionine.

This sequence in the N-terminal section; belongs to the precorrin-2 dehydrogenase / sirohydrochlorin ferrochelatase family. The protein in the C-terminal section; belongs to the precorrin methyltransferase family.

It carries out the reaction uroporphyrinogen III + 2 S-adenosyl-L-methionine = precorrin-2 + 2 S-adenosyl-L-homocysteine + H(+). The enzyme catalyses precorrin-2 + NAD(+) = sirohydrochlorin + NADH + 2 H(+). It catalyses the reaction siroheme + 2 H(+) = sirohydrochlorin + Fe(2+). Its pathway is cofactor biosynthesis; adenosylcobalamin biosynthesis; precorrin-2 from uroporphyrinogen III: step 1/1. It functions in the pathway cofactor biosynthesis; adenosylcobalamin biosynthesis; sirohydrochlorin from precorrin-2: step 1/1. It participates in porphyrin-containing compound metabolism; siroheme biosynthesis; precorrin-2 from uroporphyrinogen III: step 1/1. The protein operates within porphyrin-containing compound metabolism; siroheme biosynthesis; siroheme from sirohydrochlorin: step 1/1. Its pathway is porphyrin-containing compound metabolism; siroheme biosynthesis; sirohydrochlorin from precorrin-2: step 1/1. Its function is as follows. Multifunctional enzyme that catalyzes the SAM-dependent methylations of uroporphyrinogen III at position C-2 and C-7 to form precorrin-2 via precorrin-1. Then it catalyzes the NAD-dependent ring dehydrogenation of precorrin-2 to yield sirohydrochlorin. Finally, it catalyzes the ferrochelation of sirohydrochlorin to yield siroheme. The protein is Siroheme synthase of Shigella flexneri.